Here is a 622-residue protein sequence, read N- to C-terminus: Low affinity potassium transport system protein Kup (622 aa).

Transmembrane regions (helical) follow at residues 9 to 29, 46 to 66, 101 to 121, 137 to 157, 165 to 185, 213 to 233, 247 to 267, 276 to 296, 337 to 357, 363 to 383, 395 to 415, and 416 to 436; these read LSAV…TSPL, PDVV…VVSV, ILVV…VITP, PALD…LFVI, VGKL…LLGL, VSFF…ALYA, WFTV…ALLL, PFFL…ATLA, IYIP…IIGF, LAAA…ILFC, FLVV…FSAN, and VLKL…MFII.

This sequence belongs to the HAK/KUP transporter (TC 2.A.72) family.

The protein resides in the cell inner membrane. It carries out the reaction K(+)(in) + H(+)(in) = K(+)(out) + H(+)(out). Its function is as follows. Responsible for the low-affinity transport of potassium into the cell. Likely operates as a K(+):H(+) symporter. This Yersinia pestis (strain Pestoides F) protein is Low affinity potassium transport system protein Kup.